The following is a 129-amino-acid chain: Capsid protein (129 aa).

The interval 31–104 (EWISSNSRSQ…FATNSDCELI (74 aa)) is viral RNA-binding.

This sequence belongs to the Leviviricetes capsid protein family. In terms of assembly, homodimer. The capsid proteins form dimers that assemble by group of 5. Twelve such pentamers are linked together with free dimers. The homodimers binds to the viral RNA via an operator hairpin, but also to many other RNA sequences in the viral genome; this interaction probably shifts the virus from the replicative to the assembly phase and ensures specific encapsidation of the viral genome.

The protein localises to the virion. Capsid protein self-assembles to form an icosahedral capsid with a T=3 symmetry, about 26 nm in diameter, and consisting of 89 capsid proteins dimers (178 capsid proteins). Involved in viral genome encapsidation through the interaction between a capsid protein dimer and the multiple packaging signals present in the RNA genome. The capsid also contains 1 copy of the A2 maturation protein. In terms of biological role, acts as a translational repressor of viral replicase synthesis late in infection. This latter function is the result of capsid protein interaction with an RNA hairpin which contains the replicase ribosome-binding site. This chain is Capsid protein, found in Escherichia coli (Bacteriophage R17).